Here is a 426-residue protein sequence, read N- to C-terminus: 5-methylthioadenosine/S-adenosylhomocysteine deaminase (426 aa).

Zn(2+) contacts are provided by H60 and H62. Residues E89 and H179 each coordinate substrate. Position 206 (H206) interacts with Zn(2+). Substrate is bound by residues E209 and D294. A Zn(2+)-binding site is contributed by D294.

This sequence belongs to the metallo-dependent hydrolases superfamily. MTA/SAH deaminase family. Zn(2+) serves as cofactor.

It carries out the reaction S-adenosyl-L-homocysteine + H2O + H(+) = S-inosyl-L-homocysteine + NH4(+). The enzyme catalyses S-methyl-5'-thioadenosine + H2O + H(+) = S-methyl-5'-thioinosine + NH4(+). In terms of biological role, catalyzes the deamination of 5-methylthioadenosine and S-adenosyl-L-homocysteine into 5-methylthioinosine and S-inosyl-L-homocysteine, respectively. Is also able to deaminate adenosine. This chain is 5-methylthioadenosine/S-adenosylhomocysteine deaminase, found in Dictyoglomus turgidum (strain DSM 6724 / Z-1310).